We begin with the raw amino-acid sequence, 362 residues long: Phosphoserine aminotransferase (362 aa).

The L-glutamate site is built by Ser-9 and Arg-42. Pyridoxal 5'-phosphate is bound by residues 76–77 (GR), Trp-102, Thr-153, Asp-174, and Gln-197. Lys-198 bears the N6-(pyridoxal phosphate)lysine mark. 239-240 (NT) lines the pyridoxal 5'-phosphate pocket.

Belongs to the class-V pyridoxal-phosphate-dependent aminotransferase family. SerC subfamily. As to quaternary structure, homodimer. It depends on pyridoxal 5'-phosphate as a cofactor.

It localises to the cytoplasm. The enzyme catalyses O-phospho-L-serine + 2-oxoglutarate = 3-phosphooxypyruvate + L-glutamate. It catalyses the reaction 4-(phosphooxy)-L-threonine + 2-oxoglutarate = (R)-3-hydroxy-2-oxo-4-phosphooxybutanoate + L-glutamate. Its pathway is amino-acid biosynthesis; L-serine biosynthesis; L-serine from 3-phospho-D-glycerate: step 2/3. It functions in the pathway cofactor biosynthesis; pyridoxine 5'-phosphate biosynthesis; pyridoxine 5'-phosphate from D-erythrose 4-phosphate: step 3/5. Its function is as follows. Catalyzes the reversible conversion of 3-phosphohydroxypyruvate to phosphoserine and of 3-hydroxy-2-oxo-4-phosphonooxybutanoate to phosphohydroxythreonine. The polypeptide is Phosphoserine aminotransferase (Escherichia coli (strain ATCC 8739 / DSM 1576 / NBRC 3972 / NCIMB 8545 / WDCM 00012 / Crooks)).